The sequence spans 122 residues: Large ribosomal subunit protein uL14 (122 aa).

This sequence belongs to the universal ribosomal protein uL14 family. As to quaternary structure, part of the 50S ribosomal subunit. Forms a cluster with proteins L3 and L19. In the 70S ribosome, L14 and L19 interact and together make contacts with the 16S rRNA in bridges B5 and B8.

In terms of biological role, binds to 23S rRNA. Forms part of two intersubunit bridges in the 70S ribosome. The sequence is that of Large ribosomal subunit protein uL14 from Enterococcus faecalis (strain ATCC 700802 / V583).